Consider the following 86-residue polypeptide: DNA-directed RNA polymerase subunit Rpo11 (86 aa).

This sequence belongs to the archaeal Rpo11/eukaryotic RPB11/RPC19 RNA polymerase subunit family. In terms of assembly, part of the RNA polymerase complex.

It is found in the cytoplasm. The enzyme catalyses RNA(n) + a ribonucleoside 5'-triphosphate = RNA(n+1) + diphosphate. Functionally, DNA-dependent RNA polymerase (RNAP) catalyzes the transcription of DNA into RNA using the four ribonucleoside triphosphates as substrates. The polypeptide is DNA-directed RNA polymerase subunit Rpo11 (Archaeoglobus fulgidus (strain ATCC 49558 / DSM 4304 / JCM 9628 / NBRC 100126 / VC-16)).